We begin with the raw amino-acid sequence, 257 residues long: MLILISPAKTLDYQSPLATTRYTQPELLDHSQQLIQQARQLSAPQISRLMGISDKLADLNATRFHDWQPHFTPDNARQAILAFKGDVYTGLQAETFNDADFDFAQQHLRMLSGLYGVLRPLDLMQPYRLEMGIRLENPRGKDLYQFWGDIITDKLNEALEAQGDRVVVNLASEEYFKSVKPKKLNAELIKPVFLDEKNGKFKVVSFYAKKARGLMSRFIIENRLTKPEQLIAFDREGYFFDEETSTQDELVFKRYEQ.

Belongs to the UPF0246 family.

The protein is UPF0246 protein YaaA of Salmonella agona (strain SL483).